We begin with the raw amino-acid sequence, 466 residues long: UDP-N-acetylmuramoylalanine--D-glutamate ligase (466 aa).

Residue 117–123 coordinates ATP; it reads GTKGKTT.

It belongs to the MurCDEF family.

The protein localises to the cytoplasm. The enzyme catalyses UDP-N-acetyl-alpha-D-muramoyl-L-alanine + D-glutamate + ATP = UDP-N-acetyl-alpha-D-muramoyl-L-alanyl-D-glutamate + ADP + phosphate + H(+). It participates in cell wall biogenesis; peptidoglycan biosynthesis. Its function is as follows. Cell wall formation. Catalyzes the addition of glutamate to the nucleotide precursor UDP-N-acetylmuramoyl-L-alanine (UMA). In Roseiflexus sp. (strain RS-1), this protein is UDP-N-acetylmuramoylalanine--D-glutamate ligase.